Reading from the N-terminus, the 259-residue chain is Acyl-[acyl-carrier-protein]--UDP-N-acetylglucosamine O-acyltransferase (259 aa).

This sequence belongs to the transferase hexapeptide repeat family. LpxA subfamily. As to quaternary structure, homotrimer.

The protein localises to the cytoplasm. The enzyme catalyses a (3R)-hydroxyacyl-[ACP] + UDP-N-acetyl-alpha-D-glucosamine = a UDP-3-O-[(3R)-3-hydroxyacyl]-N-acetyl-alpha-D-glucosamine + holo-[ACP]. The protein operates within glycolipid biosynthesis; lipid IV(A) biosynthesis; lipid IV(A) from (3R)-3-hydroxytetradecanoyl-[acyl-carrier-protein] and UDP-N-acetyl-alpha-D-glucosamine: step 1/6. Involved in the biosynthesis of lipid A, a phosphorylated glycolipid that anchors the lipopolysaccharide to the outer membrane of the cell. This is Acyl-[acyl-carrier-protein]--UDP-N-acetylglucosamine O-acyltransferase from Akkermansia muciniphila (strain ATCC BAA-835 / DSM 22959 / JCM 33894 / BCRC 81048 / CCUG 64013 / CIP 107961 / Muc).